Reading from the N-terminus, the 576-residue chain is Proline--tRNA ligase (576 aa).

Belongs to the class-II aminoacyl-tRNA synthetase family. ProS type 1 subfamily. In terms of assembly, homodimer.

It localises to the cytoplasm. It carries out the reaction tRNA(Pro) + L-proline + ATP = L-prolyl-tRNA(Pro) + AMP + diphosphate. Functionally, catalyzes the attachment of proline to tRNA(Pro) in a two-step reaction: proline is first activated by ATP to form Pro-AMP and then transferred to the acceptor end of tRNA(Pro). As ProRS can inadvertently accommodate and process non-cognate amino acids such as alanine and cysteine, to avoid such errors it has two additional distinct editing activities against alanine. One activity is designated as 'pretransfer' editing and involves the tRNA(Pro)-independent hydrolysis of activated Ala-AMP. The other activity is designated 'posttransfer' editing and involves deacylation of mischarged Ala-tRNA(Pro). The misacylated Cys-tRNA(Pro) is not edited by ProRS. The chain is Proline--tRNA ligase from Bordetella petrii (strain ATCC BAA-461 / DSM 12804 / CCUG 43448).